The chain runs to 136 residues: Piercer of microtubule wall 1 protein (136 aa).

The segment at 1 to 24 (MAEECPRACAEPVAPKATAPPERT) is disordered.

This sequence belongs to the PIERCE1 family. Microtubule inner protein component of sperm flagellar doublet microtubules. Interacts with CFAP53, ODAD1 and ODAD3; the interactions link the outer dynein arms docking complex (ODA-DC) to the internal microtubule inner proteins (MIP) in cilium axoneme. Expressed in airway epithelial cells.

It localises to the cytoplasm. It is found in the cytoskeleton. The protein resides in the cilium axoneme. Its subcellular location is the flagellum axoneme. Functionally, microtubule inner protein involved in the attachment of outer dynein arms (ODAs) to dynein-decorated doublet microtubules (DMTs) in cilia axoneme, which is required for motile cilia beating. Functions at the initial step of left-right asymmetry specification of the visceral organs. This Homo sapiens (Human) protein is Piercer of microtubule wall 1 protein.